The chain runs to 277 residues: 3-methyl-2-oxobutanoate hydroxymethyltransferase (277 aa).

Mg(2+) is bound by residues D53 and D96. Residues 53-54, D96, and K126 each bind 3-methyl-2-oxobutanoate; that span reads DS. E128 is a Mg(2+) binding site. The active-site Proton acceptor is the E195.

The protein belongs to the PanB family. As to quaternary structure, homodecamer; pentamer of dimers. It depends on Mg(2+) as a cofactor.

The protein localises to the cytoplasm. The catalysed reaction is 3-methyl-2-oxobutanoate + (6R)-5,10-methylene-5,6,7,8-tetrahydrofolate + H2O = 2-dehydropantoate + (6S)-5,6,7,8-tetrahydrofolate. It participates in cofactor biosynthesis; (R)-pantothenate biosynthesis; (R)-pantoate from 3-methyl-2-oxobutanoate: step 1/2. Its function is as follows. Catalyzes the reversible reaction in which hydroxymethyl group from 5,10-methylenetetrahydrofolate is transferred onto alpha-ketoisovalerate to form ketopantoate. The protein is 3-methyl-2-oxobutanoate hydroxymethyltransferase of Chlorobium luteolum (strain DSM 273 / BCRC 81028 / 2530) (Pelodictyon luteolum).